The sequence spans 53 residues: Reg12l (53 aa).

Positions 1 to 34 (RVLFRSGDQPADQPAERMQDISPEQNPLFHPDKR) are excised as a propeptide. 3 disulfide bridges follow: C36-C50, C37-C48, and C42-C51.

It belongs to the conotoxin M superfamily. In terms of tissue distribution, expressed by the venom duct.

It is found in the secreted. The polypeptide is Reg12l (Conus regius (Crown cone)).